Consider the following 269-residue polypeptide: Magnetosome protein MamX (269 aa).

Over 1 to 10 (MNTKAVAHPD) the chain is Cytoplasmic. A helical membrane pass occupies residues 11-31 (IAVWIMALGIAFSMALVLTAL). The Lumenal segment spans residues 32-269 (FNANPWEDHT…NVGGVDAEER (238 aa)). An MCR (magnetochrome) 1 motif is present at residues 48 to 71 (IVAGMAAPHRDGREKMVCSSCHIV). C65, C68, H69, C104, C107, and H108 together coordinate heme. The short motif at 87 to 110 (IVEGTPAPHVDGREKMACASCHTI) is the MCR 2 element.

Belongs to the magnetosome MamX family. Probably interacts with FtsZ-like and MamY proteins. Heme serves as cofactor.

It is found in the magnetosome membrane. Its function is as follows. Required for correct biomineralization of the magnetosome, maybe via redox control. May function with MamY, MamZ amd Mms6 in biomineralization. The polypeptide is Magnetosome protein MamX (Magnetospirillum gryphiswaldense (strain DSM 6361 / JCM 21280 / NBRC 15271 / MSR-1)).